The following is an 86-amino-acid chain: Large ribosomal subunit protein bL35m (86 aa).

A mitochondrion-targeting transit peptide spans 1 to 18 (MLVVFQRVVRATVLVGRK). The disordered stretch occupies residues 45 to 69 (RKHAGAQHLNRDTSSSTRARQRQWE).

The protein belongs to the bacterial ribosomal protein bL35 family. As to quaternary structure, component of the mitochondrial large ribosomal subunit (mt-LSU). Mature yeast 74S mitochondrial ribosomes consist of a small (37S) and a large (54S) subunit. The 37S small subunit contains a 15S ribosomal RNA (15S mt-rRNA) and at least 32 different proteins. The 54S large subunit contains a 21S rRNA (21S mt-rRNA) and at least 45 different proteins.

The protein localises to the mitochondrion. Its function is as follows. Component of the mitochondrial ribosome (mitoribosome), a dedicated translation machinery responsible for the synthesis of mitochondrial genome-encoded proteins, including at least some of the essential transmembrane subunits of the mitochondrial respiratory chain. The mitoribosomes are attached to the mitochondrial inner membrane and translation products are cotranslationally integrated into the membrane. The chain is Large ribosomal subunit protein bL35m (new15) from Schizosaccharomyces pombe (strain 972 / ATCC 24843) (Fission yeast).